Consider the following 541-residue polypeptide: NADH-ubiquinone oxidoreductase chain 5 (541 aa).

A run of 16 helical transmembrane segments spans residues Leu17–Phe37, Thr48–Met70, Phe74–Met94, Gly98–Phe118, Ile130–Phe150, Tyr157–Thr177, Ala191–Tyr213, Gly226–Phe246, Leu263–Phe283, His285–Val305, Ser322–Phe342, Ser353–Tyr373, Leu404–Gly424, Ile429–Leu449, Ser455–Gly475, and Phe518–Met538.

It belongs to the complex I subunit 5 family.

Its subcellular location is the mitochondrion inner membrane. The enzyme catalyses a ubiquinone + NADH + 5 H(+)(in) = a ubiquinol + NAD(+) + 4 H(+)(out). Core subunit of the mitochondrial membrane respiratory chain NADH dehydrogenase (Complex I) that is believed to belong to the minimal assembly required for catalysis. Complex I functions in the transfer of electrons from NADH to the respiratory chain. The immediate electron acceptor for the enzyme is believed to be ubiquinone. The chain is NADH-ubiquinone oxidoreductase chain 5 (ND5) from Artemia franciscana (Brine shrimp).